Here is a 903-residue protein sequence, read N- to C-terminus: Disintegrin and metalloproteinase domain-containing protein 12 (903 aa).

The signal sequence occupies residues 1–31; sequence MAERPARRAPPARALLLALAGALLAPRAARG. Positions 32–205 are excised as a propeptide; the sequence is MSLWDQRGTY…SQMRARRHKR (174 aa). Residues Asn-112, Asn-147, and Asn-157 are each glycosylated (N-linked (GlcNAc...) asparagine). Residues 175 to 182 carry the Cysteine switch motif; it reads GLCGSQHN. Cys-177 contacts Zn(2+). 2 N-linked (GlcNAc...) asparagine glycosylation sites follow: Asn-182 and Asn-185. The Extracellular portion of the chain corresponds to 206–706; the sequence is ETLKMTKYVE…GPIRQADNQG (501 aa). The 203-residue stretch at 212 to 414 folds into the Peptidase M12B domain; sequence KYVELVIVAD…GMGMCLFNLP (203 aa). Cystine bridges form between Cys-323/Cys-409, Cys-365/Cys-393, and Cys-367/Cys-376. Zn(2+) is bound at residue His-348. The active site involves Glu-349. Positions 352 and 358 each coordinate Zn(2+). The Disintegrin domain occupies 422–508; it reads GRKCGNGYVE…HCPANVYLHD (87 aa). The N-linked (GlcNAc...) asparagine glycan is linked to Asn-450. A disulfide bridge connects residues Cys-480 and Cys-500. N-linked (GlcNAc...) asparagine glycosylation occurs at Asn-649. Residues 654-686 form the EGF-like domain; the sequence is GVHKCAMQCHGRGVCNNRKNCHCEAHWAPPFCD. Intrachain disulfides connect Cys-658–Cys-668, Cys-662–Cys-674, and Cys-676–Cys-685. A helical membrane pass occupies residues 707-727; that stretch reads LTVGILVSILCLLAAGFVVYL. Over 728–903 the chain is Cytoplasmic; the sequence is KRKTLMRLLF…PRPSHNAYIK (176 aa). 2 disordered regions span residues 753–790 and 819–903; these read SRTP…HSLK and HQTP…AYIK. 2 consecutive short sequence motifs (SH3-binding; class II) follow at residues 824–830 and 846–852; these read APSGPAR and KPSPPQK. 3 short sequence motifs (SH3-binding; class I) span residues 830–837, 852–858, and 881–887; these read RPLPASPA, KPLPADP, and RPAPIRP. Positions 847 to 856 are enriched in pro residues; sequence PSPPQKPLPA. Tyr-901 is modified (phosphotyrosine; by SRC).

As to quaternary structure, interacts with alpha-actinin-2 and with syndecans. Interacts with SH3PXD2A. Interacts with FST3. Interacts with RACK1; the interaction is required for PKC-dependent translocation of ADAM12 to the cell membrane. Requires Zn(2+) as cofactor. The precursor is cleaved by a furin endopeptidase. In terms of tissue distribution, expressed during early developing mesenchymal cells that give rise to skeletal muscle, bones and visceral organs. Not expressed in adult normal muscle but expressed in regenerating muscle.

It is found in the membrane. Functionally, involved in skeletal muscle regeneration, specifically at the onset of cell fusion. Also involved in macrophage-derived giant cells (MGC) and osteoclast formation from mononuclear precursors. The sequence is that of Disintegrin and metalloproteinase domain-containing protein 12 (Adam12) from Mus musculus (Mouse).